The sequence spans 240 residues: Tubulin alpha chain (240 aa).

Asparagine 17 contributes to the GTP binding site. Glutamate 43 is a catalytic residue.

The protein belongs to the tubulin family. Dimer of alpha and beta chains. A typical microtubule is a hollow water-filled tube with an outer diameter of 25 nm and an inner diameter of 15 nM. Alpha-beta heterodimers associate head-to-tail to form protofilaments running lengthwise along the microtubule wall with the beta-tubulin subunit facing the microtubule plus end conferring a structural polarity. Microtubules usually have 13 protofilaments but different protofilament numbers can be found in some organisms and specialized cells. Mg(2+) serves as cofactor. Post-translationally, undergoes a tyrosination/detyrosination cycle, the cyclic removal and re-addition of a C-terminal tyrosine residue by the enzymes tubulin tyrosine carboxypeptidase (TTCP) and tubulin tyrosine ligase (TTL), respectively.

It localises to the cytoplasm. Its subcellular location is the cytoskeleton. The catalysed reaction is GTP + H2O = GDP + phosphate + H(+). In terms of biological role, tubulin is the major constituent of microtubules, a cylinder consisting of laterally associated linear protofilaments composed of alpha- and beta-tubulin heterodimers. Microtubules grow by the addition of GTP-tubulin dimers to the microtubule end, where a stabilizing cap forms. Below the cap, tubulin dimers are in GDP-bound state, owing to GTPase activity of alpha-tubulin. The chain is Tubulin alpha chain from Octopus vulgaris (Common octopus).